The following is a 749-amino-acid chain: Cytosolic phospholipase A2 (749 aa).

The tract at residues 1–178 is phospholipid binding; the sequence is MSFIDPYQHI…MKKLLGPKKS (178 aa). The residue at position 2 (S2) is a Phosphoserine. Residues 6–122 enclose the C2 domain; the sequence is PYQHIIVEHQ…KVGEKKEVPF (117 aa). Ca(2+) contacts are provided by D40, T41, D43, N65, D93, A94, and N95. Residues 140–740 form the PLA2c domain; sequence SCPDLRFSMA…SNVEARRFFN (601 aa). The active-site Nucleophile is S228. T268 bears the Phosphothreonine mark. The interval 427 to 456 is disordered; it reads KHIVSNDSSDSDDESQEPKGTENEDAERDY. Phosphoserine occurs at positions 434, 435, and 437. S505 is subject to Phosphoserine; by MAPK. S515 is subject to Phosphoserine. K541 participates in a covalent cross-link: Glycyl lysine isopeptide (Lys-Gly) (interchain with G-Cter in SUMO2). D549 functions as the Proton acceptor in the catalytic mechanism. A Glycyl lysine isopeptide (Lys-Gly) (interchain with G-Cter in SUMO2) cross-link involves residue K606. S727 and S729 each carry phosphoserine.

As to quaternary structure, interacts with KAT5. Post-translationally, phosphorylated at both Ser-505 and Ser-727 in response to mitogenic stimuli.

It localises to the cytoplasm. The protein localises to the golgi apparatus membrane. The protein resides in the nucleus envelope. It catalyses the reaction a 1,2-diacyl-sn-glycero-3-phosphocholine + H2O = a 1-acyl-sn-glycero-3-phosphocholine + a fatty acid + H(+). The catalysed reaction is a 1-O-alkyl-2-acyl-sn-glycero-3-phosphocholine + H2O = a 1-O-alkyl-sn-glycero-3-phosphocholine + a fatty acid + H(+). The enzyme catalyses a 1-acyl-sn-glycero-3-phosphocholine + H2O = sn-glycerol 3-phosphocholine + a fatty acid + H(+). It carries out the reaction 1-hexadecanoyl-2-(5Z,8Z,11Z,14Z-eicosatetraenoyl)-sn-glycero-3-phosphocholine + H2O = 1-hexadecanoyl-sn-glycero-3-phosphocholine + (5Z,8Z,11Z,14Z)-eicosatetraenoate + H(+). It catalyses the reaction 1,2-di-(5Z,8Z,11Z,14Z-eicosatetraenoyl)-sn-glycero-3-phosphocholine + H2O = 1-(5Z,8Z,11Z,14Z-eicosatetraenoyl)-sn-glycero-3-phosphocholine + (5Z,8Z,11Z,14Z)-eicosatetraenoate + H(+). The catalysed reaction is 1-octadecanoyl-2-(5Z,8Z,11Z,14Z-eicosatetraenoyl)-sn-glycero-3-phosphocholine + H2O = 1-octadecanoyl-sn-glycero-3-phosphocholine + (5Z,8Z,11Z,14Z)-eicosatetraenoate + H(+). The enzyme catalyses 1-hexadecanoyl-2-(9Z,12Z-octadecadienoyl)-sn-glycero-3-phosphocholine + H2O = (9Z,12Z)-octadecadienoate + 1-hexadecanoyl-sn-glycero-3-phosphocholine + H(+). It carries out the reaction 1-octadecanoyl-2-(9Z,12Z,15Z-octadecatrienoyl)-sn-glycero-3-phosphocholine + H2O = (9Z,12Z,15Z)-octadecatrienoate + 1-octadecanoyl-sn-glycero-3-phosphocholine + H(+). It catalyses the reaction 1-(5Z,8Z,11Z,14Z-eicosatetraenoyl)-2-hexadecanoyl-sn-glycero-3-phosphocholine + H2O = 1-(5Z,8Z,11Z,14Z-eicosatetraenoyl)-sn-glycero-3-phosphocholine + hexadecanoate + H(+). The catalysed reaction is 1-O-hexadecyl-2-(5Z,8Z,11Z,14Z)-eicosatetraenoyl-sn-glycero-3-phosphocholine + H2O = 1-O-hexadecyl-sn-glycero-3-phosphocholine + (5Z,8Z,11Z,14Z)-eicosatetraenoate + H(+). The enzyme catalyses 1,2-di-(9Z-octadecenoyl)-sn-glycero-3-phospho-(1'-sn-glycerol) + H2O = 1-(9Z-octadecenoyl)-sn-glycero-3-phospho-(1'-sn-glycerol) + (9Z)-octadecenoate + H(+). It carries out the reaction 1-octadecanoyl-2-(5Z,8Z,11Z,14Z-eicosatetraenoyl)-sn-glycero-3-phosphate + H2O = 1-octadecanoyl-sn-glycero-3-phosphate + (5Z,8Z,11Z,14Z)-eicosatetraenoate + H(+). It catalyses the reaction 1-hexadecanoyl-sn-glycero-3-phosphocholine + H2O = sn-glycerol 3-phosphocholine + hexadecanoate + H(+). The catalysed reaction is 2-(prostaglandin E2)-sn-glycero-3-phosphoethanolamine + H2O = sn-glycero-3-phosphoethanolamine + prostaglandin E2 + H(+). The enzyme catalyses 2-[(15S)-hydroxy-(5Z,8Z,11Z,13E)-eicosatetraenoyl]-sn-glycero-3-phosphocholine + H2O = (15S)-hydroxy-(5Z,8Z,11Z,13E)-eicosatetraenoate + sn-glycerol 3-phosphocholine + H(+). It carries out the reaction 2-[(15R)-hydroxy-(5Z,8Z,11Z,13E)-eicosatetraenoyl]-sn-glycero-3-phosphocholine + H2O = (15R)-hydroxy-(5Z,8Z,11Z,13E)-eicosatetraenoate + sn-glycerol 3-phosphocholine + H(+). It catalyses the reaction 2-(prostaglandin E2)-sn-glycero-3-phosphocholine + H2O = prostaglandin E2 + sn-glycerol 3-phosphocholine + H(+). The catalysed reaction is 2-[(11R)-hydroxy-(5Z,8Z,12E,14Z)-eicosatetraenoyl]-sn-glycero-3-phosphocholine + H2O = (11R)-hydroxy-(5Z,8Z,12E,14Z)-eicosatetraenoate + sn-glycerol 3-phosphocholine + H(+). The enzyme catalyses 1-(5Z,8Z,11Z,14Z-eicosatetraenoyl)-2-O-hexadecyl-sn-glycero-3-phosphocholine + H2O = 2-O-hexadecyl-sn-glycero-3-phosphocholine + (5Z,8Z,11Z,14Z)-eicosatetraenoate + H(+). It carries out the reaction 1-octadecanoyl-2-(5Z,8Z,11Z,14Z-eicosatetraenoyl)-sn-glycero-3-phosphocholine + glycerol = 1-(5Z,8Z,11Z,14Z-eicosatetraenoyl)-glycerol + 1-octadecanoyl-sn-glycero-3-phosphocholine. It catalyses the reaction 1-octadecanoyl-2-(9Z,12Z,15Z-octadecatrienoyl)-sn-glycero-3-phosphocholine + glycerol = 1-(9Z,12Z,15Z-octadecatrienoyl)-glycerol + 1-octadecanoyl-sn-glycero-3-phosphocholine. The protein operates within membrane lipid metabolism; glycerophospholipid metabolism. It functions in the pathway lipid metabolism; arachidonate metabolism. It participates in lipid metabolism; prostaglandin biosynthesis. Its pathway is lipid metabolism; leukotriene B4 biosynthesis. Activated by cytosolic calcium, which is necessary for binding to membrane lipids. Activated by phosphorylation in response to mitogenic stimuli. Its function is as follows. Has primarily calcium-dependent phospholipase and lysophospholipase activities, with a major role in membrane lipid remodeling and biosynthesis of lipid mediators of the inflammatory response. Plays an important role in embryo implantation and parturition through its ability to trigger prostanoid production. Preferentially hydrolyzes the ester bond of the fatty acyl group attached at sn-2 position of phospholipids (phospholipase A2 activity). Selectively hydrolyzes sn-2 arachidonoyl group from membrane phospholipids, providing the precursor for eicosanoid biosynthesis via the cyclooxygenase pathway. In an alternative pathway of eicosanoid biosynthesis, hydrolyzes sn-2 fatty acyl chain of eicosanoid lysophopholipids to release free bioactive eicosanoids. Hydrolyzes the ester bond of the fatty acyl group attached at sn-1 position of phospholipids (phospholipase A1 activity) only if an ether linkage rather than an ester linkage is present at the sn-2 position. This hydrolysis is not stereospecific. Has calcium-independent phospholipase A2 and lysophospholipase activities in the presence of phosphoinositides. Has O-acyltransferase activity. Catalyzes the transfer of fatty acyl chains from phospholipids to a primary hydroxyl group of glycerol (sn-1 or sn-3), potentially contributing to monoacylglycerol synthesis. This is Cytosolic phospholipase A2 (PLA2G4A) from Equus caballus (Horse).